The following is a 249-amino-acid chain: Transcription repressor MYB5 (249 aa).

2 HTH myb-type domains span residues 20 to 72 (KMGM…MNYL) and 73 to 127 (RPSV…RKKL). 2 DNA-binding regions (H-T-H motif) span residues 48–72 (WRSL…MNYL) and 100–123 (WSLI…NTHL). The tract at residues 133–180 (DPQTHKPLDANNIHKPEEEVSGGQKYPLEPISSSHTDDTTVNGGDGDS) is disordered. A compositionally biased stretch (basic and acidic residues) spans 135-150 (QTHKPLDANNIHKPEE).

As to quaternary structure, interacts with BHLH002/EGL3/MYC146, BHLH012/MYC1 and BHLH042/TT8. In terms of tissue distribution, siliques.

It localises to the nucleus. Transcription activator, when associated with BHLH002/EGL3/MYC146, BHLH012/MYC1 or BHLH042/TT8. The chain is Transcription repressor MYB5 (MYB5) from Arabidopsis thaliana (Mouse-ear cress).